Reading from the N-terminus, the 201-residue chain is Small ribosomal subunit protein uS4c (201 aa).

Residues proline 19–serine 38 are disordered. An S4 RNA-binding domain is found at methionine 89–glutamine 149.

It belongs to the universal ribosomal protein uS4 family. As to quaternary structure, part of the 30S ribosomal subunit. Contacts protein S5. The interaction surface between S4 and S5 is involved in control of translational fidelity.

The protein resides in the plastid. The protein localises to the chloroplast. Functionally, one of the primary rRNA binding proteins, it binds directly to 16S rRNA where it nucleates assembly of the body of the 30S subunit. Its function is as follows. With S5 and S12 plays an important role in translational accuracy. The polypeptide is Small ribosomal subunit protein uS4c (rps4) (Platanus occidentalis (Sycamore)).